A 280-amino-acid chain; its full sequence is Shikimate kinase (280 aa).

Pro-74–Ala-84 contacts ATP.

It belongs to the GHMP kinase family. Archaeal shikimate kinase subfamily.

It localises to the cytoplasm. The enzyme catalyses shikimate + ATP = 3-phosphoshikimate + ADP + H(+). It functions in the pathway metabolic intermediate biosynthesis; chorismate biosynthesis; chorismate from D-erythrose 4-phosphate and phosphoenolpyruvate: step 5/7. In Archaeoglobus fulgidus (strain ATCC 49558 / DSM 4304 / JCM 9628 / NBRC 100126 / VC-16), this protein is Shikimate kinase (aroK).